The primary structure comprises 582 residues: UPF0329 protein ECU07_0070 (582 aa).

Positions 326-386 are disordered; it reads EEKAKSKKKG…KTGKKSKGDQ (61 aa). Over residues 330-339 the composition is skewed to basic residues; it reads KSKKKGKKKS. Positions 344–354 are enriched in basic and acidic residues; that stretch reads EAKEEEKKESG.

It belongs to the UPF0329 family.

The chain is UPF0329 protein ECU07_0070 from Encephalitozoon cuniculi (strain GB-M1) (Microsporidian parasite).